The sequence spans 374 residues: 2-oxoglutarate-Fe(II) type oxidoreductase ppzC (374 aa).

The tract at residues 111–130 (KDGPFDSGYRGPGTQRVNPT) is disordered. The Fe2OG dioxygenase domain occupies 220-330 (YPDASLEINF…RVSMPFFWGF (111 aa)). Fe cation contacts are provided by H254, D256, and H311. Residue R321 participates in 2-oxoglutarate binding.

The protein belongs to the iron/ascorbate-dependent oxidoreductase family. Requires Fe(2+) as cofactor.

It catalyses the reaction peramine + 2-oxoglutarate + O2 = 8-hydroxyperamine + succinate + CO2. Its pathway is secondary metabolite biosynthesis. 2-oxoglutarate-Fe(II) type oxidoreductase; part of the gene cluster that mediates the biosynthesis of pyrrolopyrazines, secondary metabolites showing insecticidal activity. Within the pathway, ppzC uses peramine as substrate for hydroxylation to yield the novel analog 8-hydroxyperamine. The single multifunctional NRPS ppzA is sufficient to produce peramine via condensation of 1-pyrroline-5-carboxylate and arginine, N-methylation of the alpha-amino group of arginine and reduction of the thioester and the cyclization to form an iminium ion resulting in release from the peptide synthetase. Deprotonation of this intermediate and oxidation of the pyrroline ring would give rise to peramine. In Epichloe species that produce only peramine, the peramine synthetase gene is not localized in a gene cluster, in contrast to Metarhizium species that contain additional pyrrolopyrazine biosynthesis genes. The 2-oxoglutarate-Fe(II) type oxidoreductase ppzC hydroxylates peramine to yield the newly identified compound 8-hydroxyperamine whereas ppzD converts L-proline into trans-4-hydroxy-L-proline, a precursor of peramine biosynthesis. In Metarhizium rileyi (strain RCEF 4871) (Nomuraea rileyi), this protein is 2-oxoglutarate-Fe(II) type oxidoreductase ppzC.